Here is a 123-residue protein sequence, read N- to C-terminus: Small ribosomal subunit protein uS12 (123 aa).

Positions 1–29 (MPTINQLIRKKRQSSASRKKSPALQKCPQ) are disordered. Over residues 8–21 (IRKKRQSSASRKKS) the composition is skewed to basic residues. A 3-methylthioaspartic acid modification is found at D89.

Belongs to the universal ribosomal protein uS12 family. Part of the 30S ribosomal subunit. Contacts proteins S8 and S17. May interact with IF1 in the 30S initiation complex.

In terms of biological role, with S4 and S5 plays an important role in translational accuracy. Functionally, interacts with and stabilizes bases of the 16S rRNA that are involved in tRNA selection in the A site and with the mRNA backbone. Located at the interface of the 30S and 50S subunits, it traverses the body of the 30S subunit contacting proteins on the other side and probably holding the rRNA structure together. The combined cluster of proteins S8, S12 and S17 appears to hold together the shoulder and platform of the 30S subunit. The polypeptide is Small ribosomal subunit protein uS12 (Chlamydia abortus (strain DSM 27085 / S26/3) (Chlamydophila abortus)).